A 364-amino-acid chain; its full sequence is Nuclear hormone receptor family member nhr-53 (364 aa).

Residues 20–95 constitute a DNA-binding region (nuclear receptor); the sequence is PSYCLICCEV…VGMQRSSVQQ (76 aa). 2 NR C4-type zinc fingers span residues 23–43 and 59–83; these read CLIC…CRAC and CPKN…YEKC. The region spanning 110–363 is the NR LBD domain; sequence REEPVLDTMR…KNLYDMFSPT (254 aa).

The protein belongs to the nuclear hormone receptor family.

It localises to the nucleus. Its function is as follows. Orphan nuclear receptor. This Caenorhabditis elegans protein is Nuclear hormone receptor family member nhr-53 (nhr-53).